The sequence spans 386 residues: Alkanesulfonate monooxygenase (386 aa).

Belongs to the SsuD family.

It catalyses the reaction an alkanesulfonate + FMNH2 + O2 = an aldehyde + FMN + sulfite + H2O + 2 H(+). Functionally, catalyzes the desulfonation of aliphatic sulfonates. This is Alkanesulfonate monooxygenase from Delftia acidovorans (strain DSM 14801 / SPH-1).